A 503-amino-acid chain; its full sequence is Cytochrome P450 3A43 (503 aa).

Residue cysteine 442 coordinates heme.

It belongs to the cytochrome P450 family. Heme serves as cofactor. As to expression, highest expression level in prostate. Also expressed in liver, kidney, pancreas, fetal liver and fetal skeletal muscle.

The protein localises to the endoplasmic reticulum membrane. The protein resides in the microsome membrane. It catalyses the reaction an organic molecule + reduced [NADPH--hemoprotein reductase] + O2 = an alcohol + oxidized [NADPH--hemoprotein reductase] + H2O + H(+). Its function is as follows. Exhibits low testosterone 6-beta-hydroxylase activity. This Homo sapiens (Human) protein is Cytochrome P450 3A43 (CYP3A43).